The chain runs to 486 residues: Alpha-L-arabinofuranosidase B (486 aa).

A signal peptide spans 1–25 (MLSLKAVLRFASVAVAVVLPTLAQA). A glycan (N-linked (GlcNAc...) asparagine) is linked at Asn42. Residues 45-342 (LVKQRADPQI…KLYWRSDGTP (298 aa)) are catalytic. Residue Asp51 is the Proton acceptor of the active site. The Proton donor role is filled by Glu229. N-linked (GlcNAc...) asparagine glycosylation is found at Asn302, Asn416, and Asn426. Positions 359-467 (SSADQTLYVG…AGSYLVSGGN (109 aa)) are ABD.

This sequence belongs to the glycosyl hydrolase 43 family.

The protein resides in the secreted. The catalysed reaction is Hydrolysis of terminal non-reducing alpha-L-arabinofuranoside residues in alpha-L-arabinosides.. Its pathway is glycan metabolism; L-arabinan degradation. In terms of biological role, secreted arabinofuranosidase that causes degradation of rice cell wall components during infection. Required for virulence. This is Alpha-L-arabinofuranosidase B from Pyricularia oryzae (strain 70-15 / ATCC MYA-4617 / FGSC 8958) (Rice blast fungus).